The primary structure comprises 115 residues: NADH-ubiquinone oxidoreductase chain 3 (115 aa).

Helical transmembrane passes span 3–23, 55–75, and 84–104; these read LMLT…IAFW, FFLV…LLPL, and LNTM…SLAY.

This sequence belongs to the complex I subunit 3 family. Core subunit of respiratory chain NADH dehydrogenase (Complex I) which is composed of 45 different subunits. Interacts with TMEM186. Interacts with TMEM242.

It localises to the mitochondrion inner membrane. The catalysed reaction is a ubiquinone + NADH + 5 H(+)(in) = a ubiquinol + NAD(+) + 4 H(+)(out). Core subunit of the mitochondrial membrane respiratory chain NADH dehydrogenase (Complex I) which catalyzes electron transfer from NADH through the respiratory chain, using ubiquinone as an electron acceptor. Essential for the catalytic activity of complex I. This Equus caballus (Horse) protein is NADH-ubiquinone oxidoreductase chain 3.